A 190-amino-acid chain; its full sequence is Secretory phospholipase A2 (190 aa).

An N-terminal signal peptide occupies residues 1-15; that stretch reads MKLAYFSSLLPLALA. Cysteine 62 and cysteine 78 form a disulfide bridge. Alanine 65 is a binding site for Ca(2+). Histidine 81 is an active-site residue. Ca(2+) is bound at residue aspartate 82.

Belongs to the phospholipase A2 family. Ca(2+) serves as cofactor.

It localises to the lipid droplet. Its subcellular location is the secreted. The enzyme catalyses a 1,2-diacyl-sn-glycero-3-phosphocholine + H2O = a 1-acyl-sn-glycero-3-phosphocholine + a fatty acid + H(+). Its function is as follows. Secretory phospholipase that catalyzes the calcium-dependent hydrolysis of the 2-acyl groups in 3-sn-phosphoglycerides. Increases the ability to utilize insect-derived nutrients and lipids, and promotes lipid dropplets accumulation. Plays a role in virulence, including more efficient penetration of the insect cuticle and evasion of host immune response by repressing the expression of host immunity genes. This chain is Secretory phospholipase A2, found in Beauveria bassiana (strain ARSEF 2860) (White muscardine disease fungus).